The primary structure comprises 489 residues: UDP-N-acetylmuramate--L-alanine ligase (489 aa).

130–136 (GTHGKTS) is an ATP binding site.

It belongs to the MurCDEF family.

Its subcellular location is the cytoplasm. It catalyses the reaction UDP-N-acetyl-alpha-D-muramate + L-alanine + ATP = UDP-N-acetyl-alpha-D-muramoyl-L-alanine + ADP + phosphate + H(+). It participates in cell wall biogenesis; peptidoglycan biosynthesis. Functionally, cell wall formation. This is UDP-N-acetylmuramate--L-alanine ligase from Corynebacterium efficiens (strain DSM 44549 / YS-314 / AJ 12310 / JCM 11189 / NBRC 100395).